We begin with the raw amino-acid sequence, 207 residues long: Urease accessory protein UreG (207 aa).

A GTP-binding site is contributed by 12–19 (GPVGAGKT).

It belongs to the SIMIBI class G3E GTPase family. UreG subfamily. As to quaternary structure, homodimer. UreD, UreF and UreG form a complex that acts as a GTP-hydrolysis-dependent molecular chaperone, activating the urease apoprotein by helping to assemble the nickel containing metallocenter of UreC. The UreE protein probably delivers the nickel.

Its subcellular location is the cytoplasm. In terms of biological role, facilitates the functional incorporation of the urease nickel metallocenter. This process requires GTP hydrolysis, probably effectuated by UreG. In Cereibacter sphaeroides (strain ATCC 17029 / ATH 2.4.9) (Rhodobacter sphaeroides), this protein is Urease accessory protein UreG.